Reading from the N-terminus, the 447-residue chain is Cellulosome-anchoring protein (447 aa).

The first 29 residues, 1 to 29, serve as a signal peptide directing secretion; sequence MKRIKRILAVLTIFALLATINAFTFVSLA. A Cohesin domain is found at 30–180; the sequence is QTNTIEIIIG…EIIEASAPEA (151 aa). The interval 30–180 is receptor binding site for duplicated segment of CipA; that stretch reads QTNTIEIIIG…EIIEASAPEA (151 aa). The segment at 177-247 is disordered; the sequence is APEATPTPGS…EHAPFLKGYP (71 aa). Positions 188–200 are enriched in gly residues; it reads AGSGAGGGTGSSG. Over residues 201–223 the composition is skewed to low complexity; the sequence is SGQPSATPTPTATEKPSTTPKTT. 3 SLH domains span residues 216–280, 281–344, and 345–408; these read PSTT…AGKN, SSIT…EQGT, and DVKT…GAVL. In terms of domain architecture, SLH 4; truncated spans 409-429; it reads EFTDVPVNYWAYKDIAEGVIY.

It localises to the secreted. The protein localises to the cell wall. It is found in the S-layer. Anchors the cellulosome to the cell surface by binding the duplicated segment that is present at the C-terminal end of CipA. The polypeptide is Cellulosome-anchoring protein (ancA) (Acetivibrio thermocellus (strain ATCC 27405 / DSM 1237 / JCM 9322 / NBRC 103400 / NCIMB 10682 / NRRL B-4536 / VPI 7372) (Clostridium thermocellum)).